Consider the following 258-residue polypeptide: uncharacterized protein (258 aa).

Ile-17, Asp-53, Asn-80, Arg-113, Tyr-145, Lys-149, Ile-178, and Ser-180 together coordinate NADP(+). Tyr-145 functions as the Proton donor in the catalytic mechanism. Catalysis depends on Lys-149, which acts as the Lowers pKa of active site Tyr.

The protein belongs to the short-chain dehydrogenases/reductases (SDR) family.

It localises to the cytoplasm. The protein localises to the nucleus. This is an uncharacterized protein from Schizosaccharomyces pombe (strain 972 / ATCC 24843) (Fission yeast).